The chain runs to 462 residues: Argininosuccinate lyase (462 aa).

Belongs to the lyase 1 family. Argininosuccinate lyase subfamily.

It is found in the cytoplasm. It catalyses the reaction 2-(N(omega)-L-arginino)succinate = fumarate + L-arginine. It participates in amino-acid biosynthesis; L-arginine biosynthesis; L-arginine from L-ornithine and carbamoyl phosphate: step 3/3. This chain is Argininosuccinate lyase, found in Lachnoclostridium phytofermentans (strain ATCC 700394 / DSM 18823 / ISDg) (Clostridium phytofermentans).